We begin with the raw amino-acid sequence, 329 residues long: AUGMIN subunit 7 (329 aa).

The stretch at D169–K197 forms a coiled coil.

In terms of assembly, part of the augmin complex composed of 8 subunits. The complex acts on microtubules and interacts with gamma-tubulin in spindles and the phragmoplast.

It localises to the cytoplasm. The protein localises to the cytoskeleton. Its subcellular location is the spindle. It is found in the phragmoplast. Contributes to the assembly of the acentrosomal spindle and phragmoplast microtubule arrays as part of the augmin complex. Regulates the association of gamma-tubulin with the spindle and phragmoplast microtubules. This Arabidopsis thaliana (Mouse-ear cress) protein is AUGMIN subunit 7.